The sequence spans 686 residues: Phosphomethylpyrimidine synthase (686 aa).

Substrate-binding positions include Asn235, Met264, Tyr293, His329, 349–351 (SRG), 390–393 (DGMR), and Glu429. His433 lines the Zn(2+) pocket. Tyr456 provides a ligand contact to substrate. Position 497 (His497) interacts with Zn(2+). [4Fe-4S] cluster is bound by residues Cys577, Cys580, and Cys585. A disordered region spans residues 659 to 686 (IDSSGINDNKNDQQDASVVRVPSLEIEG).

The protein belongs to the ThiC family. Homodimer. It depends on [4Fe-4S] cluster as a cofactor.

The enzyme catalyses 5-amino-1-(5-phospho-beta-D-ribosyl)imidazole + S-adenosyl-L-methionine = 4-amino-2-methyl-5-(phosphooxymethyl)pyrimidine + CO + 5'-deoxyadenosine + formate + L-methionine + 3 H(+). It participates in cofactor biosynthesis; thiamine diphosphate biosynthesis. Its function is as follows. Catalyzes the synthesis of the hydroxymethylpyrimidine phosphate (HMP-P) moiety of thiamine from aminoimidazole ribotide (AIR) in a radical S-adenosyl-L-methionine (SAM)-dependent reaction. In Shewanella denitrificans (strain OS217 / ATCC BAA-1090 / DSM 15013), this protein is Phosphomethylpyrimidine synthase.